The primary structure comprises 599 residues: Growth factor receptor-bound protein 10 (599 aa).

Over residues 1–23 (MNNDINSSVESLNSACNMQSDTD) the composition is skewed to polar residues. A disordered region spans residues 1–122 (MNNDINSSVE…QPPAKHFPPG (122 aa)). Residues 32–43 (QSASNQPSASSS) show a composition bias toward low complexity. Residues 44–61 (RGQPQASPRQKMQRSQPV) are compositionally biased toward polar residues. The residue at position 50 (serine 50) is a Phosphoserine. The segment covering 97-118 (GSPPSVAPSSLPPPPSQPPAKH) has biased composition (pro residues). Position 98 is a phosphoserine; by MTOR, MAPK1 and MAPK3 (serine 98). In terms of domain architecture, Ras-associating spans 171–255 (LRKDVKVFSE…SKFLFRKNYA (85 aa)). The region spanning 295–404 (CPEIQGFLQV…WMTAFRLLKY (110 aa)) is the PH domain. At serine 433 the chain carries Phosphoserine; by MTOR and PKB/AKT1. Serine 436 bears the Phosphoserine mark. Serine 481 carries the post-translational modification Phosphoserine; by MTOR, MAPK1 and MAPK3. The region spanning 498 to 594 (WFHGRISREE…VLPCKLKHHC (97 aa)) is the SH2 domain.

The protein belongs to the GRB7/10/14 family. In terms of assembly, interacts with ligand-activated tyrosine kinase receptors, including FGFR1, INSR, IGF1R, MET and PDGFRB in a phosphotyrosine-dependent manner through the SH2 domain. Poorly binds to the EGFR. Directly interacts with MAP3K14/NIK and is recruited to the EGFR-ERBB2 complex. Interacts with GIGYF1/PERQ1 and GIGYF2/TNRC15. When unphosphorylated, interacts with AKT1 and when phosphorylated with YWHAE/14-3-3 epsilon. Interacts with NEDD4. Interacts with LRP6, thus interfering with the binding of AXIN1 to LRP6. Binds relatively non-specifically to several phosphoinositides, including PI(5)P, PI(4,5)P2, PI(3,4)P2 and PI(3,4,5)P3, with modest affinities through the PH domain. Binds to activated NRAS. Post-translationally, phosphorylated on serine residues upon EGF, FGF and PDGF stimulation.

The protein resides in the cytoplasm. Its activity is regulated as follows. Phosphorylation by mTORC1 stabilizes and activates GRB10 constituting a feedback pathway by which mTORC1 inhibits INSR-dependent signaling. In terms of biological role, adapter protein which modulates coupling of a number of cell surface receptor kinases with specific signaling pathways. Binds to, and suppress signals from, activated receptors tyrosine kinases, including the insulin (INSR) and insulin-like growth factor (IGF1R) receptors. The inhibitory effect can be achieved by 2 mechanisms: interference with the signaling pathway and increased receptor degradation. Delays and reduces AKT1 phosphorylation in response to insulin stimulation. Blocks association between INSR and IRS1 and IRS2 and prevents insulin-stimulated IRS1 and IRS2 tyrosine phosphorylation. Recruits NEDD4 to IGF1R, leading to IGF1R ubiquitination, increased internalization and degradation by both the proteasomal and lysosomal pathways. A similar role in the mediation of ubiquitination also has been suggested with INSR. Negatively regulates Wnt signaling by interacting with LRP6 intracellular portion and interfering with the binding of AXIN1 to LRP6. Positive regulator of the KDR/VEGFR-2 signaling pathway. May inhibit NEDD4-mediated degradation of KDR/VEGFR-2. This is Growth factor receptor-bound protein 10 (Grb10) from Rattus norvegicus (Rat).